The sequence spans 413 residues: Queuine tRNA-ribosyltransferase accessory subunit 2 (413 aa).

A disordered region spans residues 298–321 (LEKSETSGAERNGDVGAESEEPDA). Cys-349, Cys-351, Cys-354, and His-380 together coordinate Zn(2+).

The protein belongs to the queuine tRNA-ribosyltransferase family. QTRT2 subfamily. In terms of assembly, heterodimer of a catalytic subunit qtrt1 and an accessory subunit qtrt2. It depends on Zn(2+) as a cofactor.

The protein resides in the cytoplasm. It is found in the mitochondrion outer membrane. Functionally, non-catalytic subunit of the queuine tRNA-ribosyltransferase (TGT) that catalyzes the base-exchange of a guanine (G) residue with queuine (Q) at position 34 (anticodon wobble position) in tRNAs with GU(N) anticodons (tRNA-Asp, -Asn, -His and -Tyr), resulting in the hypermodified nucleoside queuosine (7-(((4,5-cis-dihydroxy-2-cyclopenten-1-yl)amino)methyl)-7-deazaguanosine). The chain is Queuine tRNA-ribosyltransferase accessory subunit 2 from Xenopus tropicalis (Western clawed frog).